The sequence spans 206 residues: Large ribosomal subunit protein uL4 (206 aa).

The interval 63–97 (MYKQKGTGRARHHSARAPQFRGGGKAHGPVVRSHE) is disordered. The span at 64–77 (YKQKGTGRARHHSA) shows a compositional bias: basic residues.

The protein belongs to the universal ribosomal protein uL4 family. Part of the 50S ribosomal subunit.

In terms of biological role, one of the primary rRNA binding proteins, this protein initially binds near the 5'-end of the 23S rRNA. It is important during the early stages of 50S assembly. It makes multiple contacts with different domains of the 23S rRNA in the assembled 50S subunit and ribosome. Forms part of the polypeptide exit tunnel. This chain is Large ribosomal subunit protein uL4, found in Rhizobium leguminosarum bv. trifolii (strain WSM2304).